We begin with the raw amino-acid sequence, 340 residues long: Protein-arginine kinase (340 aa).

The Phosphagen kinase C-terminal domain occupies 21–242; that stretch reads VVLSSRIRLA…EQIIMQERVA (222 aa). ATP contacts are provided by residues 24–28, His-79, Arg-113, 164–168, and 195–200; these read SSRIR, RASVM, and RGIYGE.

This sequence belongs to the ATP:guanido phosphotransferase family.

It carries out the reaction L-arginyl-[protein] + ATP = N(omega)-phospho-L-arginyl-[protein] + ADP + H(+). Catalyzes the specific phosphorylation of arginine residues in proteins. This chain is Protein-arginine kinase, found in Listeria monocytogenes serovar 1/2a (strain ATCC BAA-679 / EGD-e).